A 341-amino-acid polypeptide reads, in one-letter code: MINQVYQLVAPRQFEVTYNNVDIYSDYVIVRPLYMSICAADQRYYTGSRDENVLSQKLPMSLIHEGVGEVVFDSKGVFNKGTKVVMVPNTPTEKDDVIAENYLKSSYFRSSGHDGFMQDFVLLNHDRAVPLPDDIDLSIISYTELVTVSLHAIRRFEKKSISNKNTFGIWGDGNLGYITAILLRKLYPESKIYVFGKTDYKLSHFSFVDDVFFINKIPEGLTFDHAFECVGGRGSQSAINQMIDYISPEGSIALLGVSEFPVEVNTRLVLEKGLTLIGSSRSGSKDFQDVVDLYIQYPDIVDKLALLKGQEFEIATINDLTEAFEADLSTSWGKTVLKWIM.

Cysteine 38, histidine 64, glutamate 65, and glutamate 144 together coordinate Zn(2+).

The protein belongs to the zinc-containing alcohol dehydrogenase family. As to quaternary structure, heterodimer together with TarI. Can also form a dimer of heterodimers. Zn(2+) serves as cofactor.

The enzyme catalyses D-ribitol 5-phosphate + NADP(+) = D-ribulose 5-phosphate + NADPH + H(+). It functions in the pathway cell wall biogenesis; poly(ribitol phosphate) teichoic acid biosynthesis. In terms of biological role, catalyzes the NADPH dependent reduction of D-ribulose 5-phosphate to D-ribitol 5-phosphate. This is Ribulose-5-phosphate reductase 1 from Staphylococcus aureus (strain NCTC 8325 / PS 47).